Consider the following 339-residue polypeptide: Putative P2Y purinoceptor 10 (339 aa).

The Extracellular portion of the chain corresponds to 1-39; sequence MANLDKYTETFKMGSNSTSTAEIYCNVTNVKFQYSLYAT. 2 N-linked (GlcNAc...) asparagine glycosylation sites follow: N16 and N26. The helical transmembrane segment at 40-60 threads the bilayer; sequence TYILIFIPGLLANSAALWVLC. Residues 61–68 lie on the Cytoplasmic side of the membrane; the sequence is RFISKKNK. Residues 69–89 traverse the membrane as a helical segment; the sequence is AIIFMINLSVADLAHVLSLPL. The Extracellular portion of the chain corresponds to 90 to 103; that stretch reads RIYYYISHHWPFQR. Residues 104–124 traverse the membrane as a helical segment; it reads ALCLLCFYLKYLNMYASICFL. The cysteines at positions 106 and 181 are disulfide-linked. Topologically, residues 125-149 are cytoplasmic; sequence TCISLQRCFFLLKPFRARDWKRRYD. The chain crosses the membrane as a helical span at residues 150 to 170; it reads VGISAAIWIVVGTACLPFPIL. The Extracellular segment spans residues 171-193; the sequence is RSTDLNNNKSCFADLGYKQMNAV. N-linked (GlcNAc...) asparagine glycosylation occurs at N178. A helical transmembrane segment spans residues 194 to 214; it reads ALVGMITVAELAGFVIPVIII. Residues 215–244 lie on the Cytoplasmic side of the membrane; sequence AWCTWKTTISLRQPPMAFQGISERQKALRM. A helical transmembrane segment spans residues 245–265; the sequence is VFMCAAVFFICFTPYHINFIF. The Extracellular portion of the chain corresponds to 266–288; sequence YTMVKETIISSCPVVRIALYFHP. A helical transmembrane segment spans residues 289 to 309; that stretch reads FCLCLASLCCLLDPILYYFMA. Topologically, residues 310–339 are cytoplasmic; it reads SEFRDQLSRHGSSVTRSRLMSKESGSSMIG.

It belongs to the G-protein coupled receptor 1 family. In terms of tissue distribution, weakly expressed in blood leukocytes.

Its subcellular location is the cell membrane. In terms of biological role, putative receptor for purines coupled to G-proteins. The protein is Putative P2Y purinoceptor 10 (P2RY10) of Homo sapiens (Human).